Consider the following 423-residue polypeptide: Adenylosuccinate synthetase (423 aa).

GTP is bound by residues 13–19 (GDEGKGK) and 41–43 (GHT). Asp-14 (proton acceptor) is an active-site residue. The Mg(2+) site is built by Asp-14 and Gly-41. IMP contacts are provided by residues 14-17 (DEGK), 39-42 (NAGH), Thr-130, Arg-144, Gln-223, Thr-238, and Arg-302. Catalysis depends on His-42, which acts as the Proton donor. Residue 298–304 (SVTGRKR) participates in substrate binding. Residues Arg-304 and 410-412 (SVG) each bind GTP.

Belongs to the adenylosuccinate synthetase family. In terms of assembly, homodimer. Requires Mg(2+) as cofactor.

The protein resides in the cytoplasm. It carries out the reaction IMP + L-aspartate + GTP = N(6)-(1,2-dicarboxyethyl)-AMP + GDP + phosphate + 2 H(+). The protein operates within purine metabolism; AMP biosynthesis via de novo pathway; AMP from IMP: step 1/2. Plays an important role in the de novo pathway of purine nucleotide biosynthesis. Catalyzes the first committed step in the biosynthesis of AMP from IMP. This is Adenylosuccinate synthetase from Porphyromonas gingivalis (strain ATCC BAA-308 / W83).